Here is a 430-residue protein sequence, read N- to C-terminus: Adenylosuccinate synthetase (430 aa).

GTP contacts are provided by residues 12-18 and 40-42; these read GDEGKGK and GHT. The Proton acceptor role is filled by D13. 2 residues coordinate Mg(2+): D13 and G40. IMP-binding positions include 13 to 16, 38 to 41, T128, R142, Q223, T238, and R302; these read DEGK and NAGH. The Proton donor role is filled by H41. 298–304 contacts substrate; sequence TTTGRPR. GTP contacts are provided by residues R304, 330-332, and 412-414; these read SID and SVG.

The protein belongs to the adenylosuccinate synthetase family. Homodimer. Requires Mg(2+) as cofactor.

Its subcellular location is the cytoplasm. The enzyme catalyses IMP + L-aspartate + GTP = N(6)-(1,2-dicarboxyethyl)-AMP + GDP + phosphate + 2 H(+). Its pathway is purine metabolism; AMP biosynthesis via de novo pathway; AMP from IMP: step 1/2. Its function is as follows. Plays an important role in the de novo pathway of purine nucleotide biosynthesis. Catalyzes the first committed step in the biosynthesis of AMP from IMP. The chain is Adenylosuccinate synthetase from Streptococcus sanguinis (strain SK36).